Consider the following 346-residue polypeptide: Lysyl aminopeptidase (346 aa).

The Zn(2+) site is built by His63 and Asp177. Residue Glu207 is the Proton acceptor of the active site. Positions 208, 230, and 314 each coordinate Zn(2+).

As to quaternary structure, homotetramer. Zn(2+) serves as cofactor.

It catalyses the reaction Preferentially, release of N-terminal lysine.. Its function is as follows. Hydrolyzes di-, tri- and tetrapeptides with a lysine as the N-terminal amino acid and with Gly, Lys, Ala, Phe or Glu in the second position. This is Lysyl aminopeptidase from Pyrococcus furiosus (strain ATCC 43587 / DSM 3638 / JCM 8422 / Vc1).